A 144-amino-acid polypeptide reads, in one-letter code: MAKKIVGFVKLQVPAGKANPSPPIGPALGQRGLNIMEFCKAFNAQTQGVEPGLPLPVVITAYADKSFTFIIKTPPAITLIKKAIKLDKGSATPHSAKVGKITRAQLEEIAKAKMKDLTAADLDAAVRTIAGSARSMGVTVEGVV.

The protein belongs to the universal ribosomal protein uL11 family. Part of the ribosomal stalk of the 50S ribosomal subunit. Interacts with L10 and the large rRNA to form the base of the stalk. L10 forms an elongated spine to which L12 dimers bind in a sequential fashion forming a multimeric L10(L12)X complex. In terms of processing, one or more lysine residues are methylated.

Forms part of the ribosomal stalk which helps the ribosome interact with GTP-bound translation factors. This Polaromonas naphthalenivorans (strain CJ2) protein is Large ribosomal subunit protein uL11.